The primary structure comprises 367 residues: MPAASKNVVMIDNYDSFTWNLYEYLCQEGANVEVFRNDQITIPEIEQLKPDVVVISPGPGHPRTDSGISRDVISHFKGKIPVFGVCMGQQCIFEEFGGDVEYAGEIVHGKTSTVKHDNKGMFKNVPQDVAVTRYHSLAGTLKSLPDCLEITARTDNGIIMGVRHKKYTIEGVQFHPESILTEEGHLMIQNILNVSGGYWEENANGAAQRKESILEKIYAQRRKDYEFEMNRPGRRFADLELYLSMGLAPPLINFYDRLEQNISAGKVAILSEIKRASPSKGVIDGDANAAKQALNYAKAGVATISVLTEPTWFKGNIQDLEVARKAIDSVANRPCILRKEFIFNKYQILEARLAGADTVLLIVKMLS.

Residues 7–201 form the Glutamine amidotransferase type-1 domain; it reads NVVMIDNYDS…LNVSGGYWEE (195 aa). Residue 58 to 60 coordinates L-glutamine; it reads GPG. The Nucleophile; for GATase activity role is filled by C86. L-glutamine is bound by residues Q90 and 136–137; that span reads SL. Catalysis depends on for GATase activity residues H175 and E177. Residues 209-367 are indole-3-glycerol phosphate synthase; sequence RKESILEKIY…TVLLIVKMLS (159 aa).

In terms of assembly, tetramer of two components I and two components II.

The enzyme catalyses chorismate + L-glutamine = anthranilate + pyruvate + L-glutamate + H(+). It catalyses the reaction 1-(2-carboxyphenylamino)-1-deoxy-D-ribulose 5-phosphate + H(+) = (1S,2R)-1-C-(indol-3-yl)glycerol 3-phosphate + CO2 + H2O. Its pathway is amino-acid biosynthesis; L-tryptophan biosynthesis; L-tryptophan from chorismate: step 1/5. It functions in the pathway amino-acid biosynthesis; L-tryptophan biosynthesis; L-tryptophan from chorismate: step 4/5. This is Multifunctional tryptophan biosynthesis protein from Pichia angusta (Yeast).